A 152-amino-acid chain; its full sequence is UPF0266 membrane protein YobD (152 aa).

Transmembrane regions (helical) follow at residues 6–26 (LVLI…QFIM), 45–65 (VDSV…VTSH), and 67–87 (AQMT…IFWI).

The protein belongs to the UPF0266 family.

It is found in the cell inner membrane. The chain is UPF0266 membrane protein YobD from Salmonella enteritidis PT4 (strain P125109).